The chain runs to 123 residues: Cysteine-rich DPF motif domain-containing protein 1 (123 aa).

A disordered region spans residues 102-123; it reads RQDLEKRKAPSKRTPSQPGSRT. The segment covering 114 to 123 has biased composition (polar residues); that stretch reads RTPSQPGSRT.

Belongs to the CDPF1 family.

The sequence is that of Cysteine-rich DPF motif domain-containing protein 1 (CDPF1) from Homo sapiens (Human).